The following is a 293-amino-acid chain: MPWIQLKIDTDNQHADTLSDLLMEEGSLSITLEDGKDTPIFEPTLGETPLWNHTVLTALFEADRDLSIVVDNLKLQPFLGADFSYKIEQVEDKDWEREWMDNFHPIKFGERLWICPSWREIPDPEAVNIILDPGLAFGTGTHPTTALCLEWLDSLNFDNKEVIDFGCGSGILAVAALKLGATKVTGIDIDYQAIDASKANAERNGVEDQLTLYLPEDQPENLKADILVANILAGPLRELAPLIAEKVKPGGQLALSGLLQEQALEVAEFYTQWFDMDEPAHKEEWSRLTGIRK.

Thr-145, Gly-166, Asp-188, and Asn-230 together coordinate S-adenosyl-L-methionine.

It belongs to the methyltransferase superfamily. PrmA family.

The protein localises to the cytoplasm. The enzyme catalyses L-lysyl-[protein] + 3 S-adenosyl-L-methionine = N(6),N(6),N(6)-trimethyl-L-lysyl-[protein] + 3 S-adenosyl-L-homocysteine + 3 H(+). Methylates ribosomal protein L11. The protein is Ribosomal protein L11 methyltransferase of Shewanella woodyi (strain ATCC 51908 / MS32).